The primary structure comprises 740 residues: MLKLFSAFRKNKIWDFNGGIHPPEMKTQSNGTPLRQVPLAQRFVIPLKQHIGAEGELCVSVGDKVLRGQPLTRGRGKMLPVHAPTSGTVTAIAPHSTAHPSALAELSVIIDADGEDCWIPRDGWADYRTRSREELIERIHQFGVAGLGGAGFPTGVKLQGGGDKIETLIINAAECEPYITADDRLMQDCAAQVVEGIRILAHILQPREILIGIEDNKPQAISMLRAVLADSNDISLRVIPTKYPSGGAKQLTYILTGKQVPHGGRSSDIGVLMQNVGTAYAVKRAVIDGEPITERVVTLTGEAIARPGNVWARLGTPVRHLLNDAGFCPSADQMVIMGGPLMGFTLPWLDVPVVKITNCLLAPSANELGEPQEEQSCIRCSACADACPADLLPQQLYWFSKGQQHDKATTHNIADCIECGACAWVCPSNIPLVQYFRQEKAEIAAIRQEEKRAAEAKARFEARQARLEREKAARLERHKSAAVQPAAKDKDAIAAALARVKEKQAQATQPIVIKAGERPDNSAIIAAREARKAQARAKQAELQQTNDAATVADPRKTAVEAAIARAKARKLEQQQANAEPEQQVDPRKAAVEAAIARAKARKLEQQQANAEPEEQVDPRKAAVEAAIARAKARKLEQQQANAEPEQQVDPRKAAVEAAIARAKARKREQQPANAEPEEQVDPRKAAVEAAIARAKARKLEQQQANAVPEEQVDPRKAAVAAAIARAQAKKAAQQKVVNED.

4Fe-4S ferredoxin-type domains follow at residues 369-397 (GEPQEEQSCIRCSACADACPADLLPQQLY) and 407-436 (KATTHNIADCIECGACAWVCPSNIPLVQYF). Positions 377, 380, 383, 387, 416, 419, 422, and 426 each coordinate [4Fe-4S] cluster. Disordered regions lie at residues 571–590 (LEQQQANAEPEQQVDPRKAA) and 602–716 (KLEQ…DPRK). Composition is skewed to low complexity over residues 573-583 (QQQANAEPEQQ) and 637-647 (QQQANAEPEQQ).

The protein belongs to the 4Fe4S bacterial-type ferredoxin family. RnfC subfamily. As to quaternary structure, the complex is composed of six subunits: RsxA, RsxB, RsxC, RsxD, RsxE and RsxG. The cofactor is [4Fe-4S] cluster.

It localises to the cell inner membrane. Part of a membrane-bound complex that couples electron transfer with translocation of ions across the membrane. Required to maintain the reduced state of SoxR. Probably transfers electron from NAD(P)H to SoxR. The sequence is that of Ion-translocating oxidoreductase complex subunit C from Escherichia coli (strain K12).